The chain runs to 225 residues: Thymidylate kinase (225 aa).

An ATP-binding site is contributed by 10–17 (GVEGGGKT).

The protein belongs to the thymidylate kinase family.

The catalysed reaction is dTMP + ATP = dTDP + ADP. Its function is as follows. Phosphorylation of dTMP to form dTDP in both de novo and salvage pathways of dTTP synthesis. The sequence is that of Thymidylate kinase from Trichodesmium erythraeum (strain IMS101).